A 446-amino-acid chain; its full sequence is Histidine--tRNA ligase (446 aa).

It belongs to the class-II aminoacyl-tRNA synthetase family. As to quaternary structure, homodimer.

The protein localises to the cytoplasm. The enzyme catalyses tRNA(His) + L-histidine + ATP = L-histidyl-tRNA(His) + AMP + diphosphate + H(+). The polypeptide is Histidine--tRNA ligase (Burkholderia pseudomallei (strain K96243)).